The chain runs to 101 residues: Small ribosomal subunit protein uS14 (101 aa).

Positions Gly-36–Gly-72 are disordered. Basic and acidic residues predominate over residues Arg-61–Pro-70.

The protein belongs to the universal ribosomal protein uS14 family. As to quaternary structure, part of the 30S ribosomal subunit. Contacts proteins S3 and S10.

In terms of biological role, binds 16S rRNA, required for the assembly of 30S particles and may also be responsible for determining the conformation of the 16S rRNA at the A site. This Clavibacter michiganensis subsp. michiganensis (strain NCPPB 382) protein is Small ribosomal subunit protein uS14.